Here is a 351-residue protein sequence, read N- to C-terminus: MSDTNHSTLKVSDFSFELPDELIARYPQEQRSASRLLSVKANENSIEHKHFKNIVDEINAGDLLVFNDTRVIPARLLGEKVSGGKVEVLVERLLDDHRVLAHVRANRAPKAGAELLLEGHVKITMLARHDALFELKFEHDETVLELLEQYGHMPLPPYIDRPDESSDKERYQTVYNREPGAVAAPTAGLHFDDEILQQLRDKGVNSAYVTLHVGAGTFQPVRVEDINDHVMHSEYAKVSAETCNAIKQTKASGGRVIAVGTTSVRSLESAAQASTNESIEPFFDDTNIFIYPGYEFKVVDSMITNFHLPESTLIMLVSAFVGRDLIMKAYNEAIKERYRFFSYGDAMLLQR.

It belongs to the QueA family. As to quaternary structure, monomer.

The protein resides in the cytoplasm. The catalysed reaction is 7-aminomethyl-7-carbaguanosine(34) in tRNA + S-adenosyl-L-methionine = epoxyqueuosine(34) in tRNA + adenine + L-methionine + 2 H(+). The protein operates within tRNA modification; tRNA-queuosine biosynthesis. Functionally, transfers and isomerizes the ribose moiety from AdoMet to the 7-aminomethyl group of 7-deazaguanine (preQ1-tRNA) to give epoxyqueuosine (oQ-tRNA). The protein is S-adenosylmethionine:tRNA ribosyltransferase-isomerase of Idiomarina loihiensis (strain ATCC BAA-735 / DSM 15497 / L2-TR).